We begin with the raw amino-acid sequence, 575 residues long: MFGVQDTLARSGTALRDKALGVGMDPVRSWVRNVGVVDAKVAAQSGVAVSRAHFEKQPPSNLRKSNFFHFVLALYDRQGQPIEIERTAFVDFVENEKELSTEKTNNGTHYKLQLLYSNGVRTEQDLYVRLIDSVTKQPIAYEGQNKNPEMCRVLLTHEVMCSRCCEKKSCGNRNETPSDPVIIDRFFLKFFLKCNQNCLKTAGNPRDMRRFQVVLSTTVNVDGHVLAVSDNMFVHNNSKHGRRARRLDPSEATPCIKAISPSEGWTTGGAMVIIIGDNFFDGLQVVFGTMLVWSELITPHAIRVQTPPRHIPGVVEVTLSYKSKQFCKGAPGRFIYTALNEPTIDYGFQRLQKVIPRHPGDPERLAKEMLLKRAADLVEALYGTPHNNQDIILKRAADIAEALYSVPRNHNQIPALSSSPVHSGMMGINSYGGQLGVSISESQANNQGYIRNTSSISPRGYSSSSTPQQSNYSTPSNSMNGYSNVPMSNLGVPGSPGFINGSPTTSPYGIMPSSPPVGSSGSSSILPFSSSVFPSIKQKSAFAPVIRPQGSPSPACSSSNSNGFRAMTGLVVPPM.

The tract at residues 63–66 is interaction with DNA; it reads RKSN. The C5-type zinc finger occupies 151 to 170; the sequence is CRVLLTHEVMCSRCCEKKSC. Interaction with DNA regions lie at residues 197–204 and 236–239; these read NCLKTAGN and NNSK. In terms of domain architecture, IPT/TIG spans 254–336; the sequence is PCIKAISPSE…CKGAPGRFIY (83 aa). Positions 450–487 are disordered; that stretch reads IRNTSSISPRGYSSSSTPQQSNYSTPSNSMNGYSNVPM. Positions 454 to 476 are enriched in low complexity; that stretch reads SSISPRGYSSSSTPQQSNYSTPS. Over residues 477 to 487 the composition is skewed to polar residues; sequence NSMNGYSNVPM.

Belongs to the COE family.

Its subcellular location is the nucleus. In terms of biological role, may play a pivotal role in the transcriptional cascade that specifies primary neurons in embryos. Stabilizes the higher neural potential of selected progenitor cells that express neurog2/X-ngnr-1 by maintaining Delta-Notch signaling. Thus ensures the transition between neural competence and irreversible commitment to a neural fate. Also promotes neuronal differentiation by activating neurod1 expression, directly or indirectly. The polypeptide is Transcription factor coe2 (Xenopus tropicalis (Western clawed frog)).